The chain runs to 339 residues: Methionine import ATP-binding protein MetN 2 (339 aa).

The ABC transporter domain maps to 2 to 241 (ISFNNVSKVY…PKTKTTQNFV (240 aa)). Residue 38-45 (GFSGAGKS) coordinates ATP.

This sequence belongs to the ABC transporter superfamily. Methionine importer (TC 3.A.1.24) family. In terms of assembly, the complex is composed of two ATP-binding proteins (MetN), two transmembrane proteins (MetI) and a solute-binding protein (MetQ).

The protein resides in the cell membrane. The catalysed reaction is L-methionine(out) + ATP + H2O = L-methionine(in) + ADP + phosphate + H(+). The enzyme catalyses D-methionine(out) + ATP + H2O = D-methionine(in) + ADP + phosphate + H(+). Part of the ABC transporter complex MetNIQ involved in methionine import. Responsible for energy coupling to the transport system. The sequence is that of Methionine import ATP-binding protein MetN 2 from Bacillus cereus (strain ATCC 10987 / NRS 248).